Here is a 569-residue protein sequence, read N- to C-terminus: Synaptotagmin-4 (569 aa).

The helical transmembrane segment at 1–21 (MGFLFGLFIGIAVSFGLVVAF) threads the bilayer. The SMP-LTD domain maps to 67-251 (QRQKLNWLNL…WPVRKIIPIL (185 aa)). A phospholipid binding region spans residues 229-531 (EETIRDAIED…KIGRVIMTLT (303 aa)). C2 domains follow at residues 245-366 (RKII…DIWL) and 426-543 (TDMK…QEWF). Residues D459, D465, D514, D516, and D521 each coordinate Ca(2+).

This sequence belongs to the synaptotagmin family. Ca(2+) serves as cofactor.

Its subcellular location is the membrane. May be involved in membrane trafficking. In Arabidopsis thaliana (Mouse-ear cress), this protein is Synaptotagmin-4 (SYT4).